The primary structure comprises 503 residues: Probable DNA ligase (503 aa).

Asp212 contacts ATP. The N6-AMP-lysine intermediate role is filled by Lys214. 6 residues coordinate ATP: Arg219, Arg234, Glu263, Phe296, Arg368, and Lys374.

The protein belongs to the ATP-dependent DNA ligase family. Mg(2+) serves as cofactor.

The enzyme catalyses ATP + (deoxyribonucleotide)n-3'-hydroxyl + 5'-phospho-(deoxyribonucleotide)m = (deoxyribonucleotide)n+m + AMP + diphosphate.. Its function is as follows. DNA ligase that seals nicks in double-stranded DNA during DNA replication, DNA recombination and DNA repair. The protein is Probable DNA ligase of Kineococcus radiotolerans (strain ATCC BAA-149 / DSM 14245 / SRS30216).